A 1641-amino-acid chain; its full sequence is Histone-lysine N-methyltransferase SETD1 (1641 aa).

Residues 1 to 23 are disordered; that stretch reads MQDVRNINLVNNSSNSHDSSLAN. Over residues 8 to 23 the composition is skewed to low complexity; it reads NLVNNSSNSHDSSLAN. Residues 101–179 enclose the RRM domain; it reads VEVTIVNLND…KILDVFCDPF (79 aa). Disordered regions lie at residues 236–384, 537–596, 831–915, 930–949, 1119–1155, and 1205–1226; these read YTTQ…IDQR, APPF…SDEE, RIRK…SSSS, KART…NLNQ, QEKR…RKTA, and NSKG…SSQA. A compositionally biased stretch (basic and acidic residues) spans 244-284; it reads IPNRSRDRNWNRDKERERDRHFKERSRHSSERSYDRDRGMR. Residues 291–300 show a composition bias toward basic residues; sequence IRRRRTFYRR. Basic and acidic residues-rich tracts occupy residues 308 to 341 and 349 to 384; these read EDSR…ESFR and KGRD…IDQR. The span at 556–568 shows a compositional bias: low complexity; it reads EVFSDVNSDSNNS. Composition is skewed to basic and acidic residues over residues 569–579 and 844–867; these read ENKKRSCEKNN and NFLE…KEDS. Residues 904-915 show a composition bias toward low complexity; sequence SASSFFSSSSSS. Composition is skewed to basic and acidic residues over residues 930–939 and 1119–1128; these read KARTSEEDSP and QEKRIEKSLD. The stretch at 1091–1132 forms a coiled coil; the sequence is SEEEKEYQERRKRNTEYMAQMEREFLEEQEKRIEKSLDKNLQ. Composition is skewed to polar residues over residues 1129 to 1145 and 1205 to 1217; these read KNLQ…NSPR and NSKG…QSPV. A RxxxRR motif motif is present at residues 1473–1478; that stretch reads RSNQRR. The SET domain maps to 1502 to 1619; sequence KQLKFAKSAI…INEEITYDYK (118 aa). Tyrosine 1618 is an S-adenosyl-L-methionine binding site. A Post-SET domain is found at 1625–1641; that stretch reads EKIPCLCGAQGCRGTLN.

Belongs to the class V-like SAM-binding methyltransferase superfamily. As to quaternary structure, component of the Set1C/COMPASS complex, composed at least of the catalytic subunit Set1, wds/WDR5, Wdr82, Rbbp5, ash2, Cfp1/CXXC1, hcf and Dpy-30L1.

The protein resides in the nucleus. The protein localises to the chromosome. It catalyses the reaction L-lysyl(4)-[histone H3] + 3 S-adenosyl-L-methionine = N(6),N(6),N(6)-trimethyl-L-lysyl(4)-[histone H3] + 3 S-adenosyl-L-homocysteine + 3 H(+). It carries out the reaction N(6)-methyl-L-lysyl(4)-[histone H3] + S-adenosyl-L-methionine = N(6),N(6)-dimethyl-L-lysyl(4)-[histone H3] + S-adenosyl-L-homocysteine + H(+). The catalysed reaction is N(6),N(6)-dimethyl-L-lysyl(4)-[histone H3] + S-adenosyl-L-methionine = N(6),N(6),N(6)-trimethyl-L-lysyl(4)-[histone H3] + S-adenosyl-L-homocysteine + H(+). Its function is as follows. Catalytic component of the COMPASS (Set1C) complex that specifically mono-, di- and trimethylates histone H3 to form H3K4me1/2/3. Binds RNAs which might negatively affect its histone methyltransferase activity. COMPASS recognizes ubiquitinated H2B on one face of the nucleosome which stimulates the methylation of H3 on the opposing face. Set1-dependent trimethylation regulates chromatin changes at active promoters that ensure optimal RNA polymerase II release into productive elongation, thereby contributing to optimal transcription. This Drosophila melanogaster (Fruit fly) protein is Histone-lysine N-methyltransferase SETD1.